The following is a 157-amino-acid chain: 2-C-methyl-D-erythritol 2,4-cyclodiphosphate synthase (157 aa).

Asp8 and His10 together coordinate a divalent metal cation. 4-CDP-2-C-methyl-D-erythritol 2-phosphate-binding positions include 8–10 (DVH) and 34–35 (HS). His42 provides a ligand contact to a divalent metal cation. 4-CDP-2-C-methyl-D-erythritol 2-phosphate-binding positions include 56 to 58 (DIG), 61 to 65 (FPDTD), 100 to 106 (AQRPKMA), 132 to 135 (TTEE), and Phe139.

It belongs to the IspF family. In terms of assembly, homotrimer. It depends on a divalent metal cation as a cofactor.

The catalysed reaction is 4-CDP-2-C-methyl-D-erythritol 2-phosphate = 2-C-methyl-D-erythritol 2,4-cyclic diphosphate + CMP. It functions in the pathway isoprenoid biosynthesis; isopentenyl diphosphate biosynthesis via DXP pathway; isopentenyl diphosphate from 1-deoxy-D-xylulose 5-phosphate: step 4/6. Involved in the biosynthesis of isopentenyl diphosphate (IPP) and dimethylallyl diphosphate (DMAPP), two major building blocks of isoprenoid compounds. Catalyzes the conversion of 4-diphosphocytidyl-2-C-methyl-D-erythritol 2-phosphate (CDP-ME2P) to 2-C-methyl-D-erythritol 2,4-cyclodiphosphate (ME-CPP) with a corresponding release of cytidine 5-monophosphate (CMP). The protein is 2-C-methyl-D-erythritol 2,4-cyclodiphosphate synthase of Trichlorobacter lovleyi (strain ATCC BAA-1151 / DSM 17278 / SZ) (Geobacter lovleyi).